The sequence spans 235 residues: Sugar fermentation stimulation protein homolog (235 aa).

This sequence belongs to the SfsA family.

The sequence is that of Sugar fermentation stimulation protein homolog from Serratia proteamaculans (strain 568).